We begin with the raw amino-acid sequence, 428 residues long: Serine--tRNA ligase (428 aa).

231–233 (TAE) is a binding site for L-serine. 262–264 (RSE) lines the ATP pocket. Glu285 is a binding site for L-serine. 349–352 (EISS) contributes to the ATP binding site. Residue Ser385 participates in L-serine binding.

Belongs to the class-II aminoacyl-tRNA synthetase family. Type-1 seryl-tRNA synthetase subfamily. As to quaternary structure, homodimer. The tRNA molecule binds across the dimer.

It localises to the cytoplasm. It carries out the reaction tRNA(Ser) + L-serine + ATP = L-seryl-tRNA(Ser) + AMP + diphosphate + H(+). The enzyme catalyses tRNA(Sec) + L-serine + ATP = L-seryl-tRNA(Sec) + AMP + diphosphate + H(+). It functions in the pathway aminoacyl-tRNA biosynthesis; selenocysteinyl-tRNA(Sec) biosynthesis; L-seryl-tRNA(Sec) from L-serine and tRNA(Sec): step 1/1. Its function is as follows. Catalyzes the attachment of serine to tRNA(Ser). Is also able to aminoacylate tRNA(Sec) with serine, to form the misacylated tRNA L-seryl-tRNA(Sec), which will be further converted into selenocysteinyl-tRNA(Sec). The polypeptide is Serine--tRNA ligase (Staphylococcus aureus (strain bovine RF122 / ET3-1)).